The chain runs to 197 residues: Protein GrpE (197 aa).

The segment at 1–43 (MSSKEQKTPDGQAPEEIVTEQHEEVESVESAESAEQVDPRDEE) is disordered.

Belongs to the GrpE family. Homodimer.

It is found in the cytoplasm. In terms of biological role, participates actively in the response to hyperosmotic and heat shock by preventing the aggregation of stress-denatured proteins, in association with DnaK and GrpE. It is the nucleotide exchange factor for DnaK and may function as a thermosensor. Unfolded proteins bind initially to DnaJ; upon interaction with the DnaJ-bound protein, DnaK hydrolyzes its bound ATP, resulting in the formation of a stable complex. GrpE releases ADP from DnaK; ATP binding to DnaK triggers the release of the substrate protein, thus completing the reaction cycle. Several rounds of ATP-dependent interactions between DnaJ, DnaK and GrpE are required for fully efficient folding. The chain is Protein GrpE from Cronobacter sakazakii (strain ATCC BAA-894) (Enterobacter sakazakii).